A 436-amino-acid chain; its full sequence is MFDSTLNPLWQRYILAVQEEVKPALGCTEPISLALAAAVAAAELEGPVERVEAWVSPNLMKNGLGVTVPGTGMVGLPIAAALGALGGNANAGLEVLKDATAQAIADAKALLAAGKVSVKIQEPCNEILFSRAKVWNGEKWACVTIVGGHTNIVHIETHNSVVFTQQACVAEGEQESPLTVLSRTTLAEILKFVNEVPFAAIRFILDSAKLNCALSQEGLSGKWGLHIGATLEKQCERGLLAKDLSSSIVIRTSAASDARMGGATLPAMSNSGSGNQGITATMSVVVVAEHFGADDERLARALMLSHLSAIYIHNQLPRLSALCAATTAAMGAAAGMAWLVDGRYETISMAISSMIGDVSGMICDGASNSCAMKVSTSASAAWKAVLMALDDTAVTGNEGIVAHDVEQSIANLCALASHSMQQTDRQIIEIMASKAR.

The protein belongs to the UPF0597 family.

The chain is UPF0597 protein YhaM from Shigella boydii serotype 18 (strain CDC 3083-94 / BS512).